Here is a 307-residue protein sequence, read N- to C-terminus: DDRGK domain-containing protein 1 (307 aa).

Residues 1 to 2 (MD) lie on the Lumenal side of the membrane. A helical membrane pass occupies residues 3–23 (LILLVGIATALLLILITLYFL). The Cytoplasmic segment spans residues 24–307 (QSKNAKTETK…TPVAAGESSA (284 aa)). A disordered region spans residues 31 to 175 (ETKAAAQPQR…EADRLAKEER (145 aa)). Residues 52–83 (RRAQIARNQRNRLRQNQNAPAVAAAAAPAAAV) show a composition bias toward low complexity. A compositionally biased stretch (basic and acidic residues) spans 107–175 (LDEKMGAKKR…EADRLAKEER (69 aa)).

The protein belongs to the DDRGK1 family. As to quaternary structure, interacts with Atg9; the interaction is transient.

The protein resides in the endoplasmic reticulum membrane. In terms of biological role, substrate adapter for ufmylation, the covalent attachment of the ubiquitin-like modifier UFM1 to substrate proteins. Required for ufmylation of Atg9; protects the nervous system during aging, possibly by stabilizing Atg9 and supporting its function. The sequence is that of DDRGK domain-containing protein 1 from Drosophila virilis (Fruit fly).